A 250-amino-acid chain; its full sequence is Proteasome subunit alpha type-7 (250 aa).

Belongs to the peptidase T1A family. In terms of assembly, the 26S proteasome consists of a 20S proteasome core and two 19S regulatory subunits. The 20S proteasome core is composed of 28 subunits that are arranged in four stacked rings, resulting in a barrel-shaped structure. The two end rings are each formed by seven alpha subunits, and the two central rings are each formed by seven beta subunits. The catalytic chamber with the active sites is on the inside of the barrel.

The protein localises to the cytoplasm. It localises to the nucleus. The proteasome is a multicatalytic proteinase complex which is characterized by its ability to cleave peptides with Arg, Phe, Tyr, Leu, and Glu adjacent to the leaving group at neutral or slightly basic pH. The proteasome has an ATP-dependent proteolytic activity. The chain is Proteasome subunit alpha type-7 (psmA7) from Dictyostelium discoideum (Social amoeba).